The primary structure comprises 172 residues: Female-specific lacrimal gland protein (172 aa).

The N-terminal stretch at 1 to 16 (MVKFLLLALALGVSCA) is a signal peptide. Cystine bridges form between Cys60–Cys64 and Cys79–Cys170.

This sequence belongs to the calycin superfamily. Lipocalin family. In terms of tissue distribution, expressed in the lacrimal gland from where it is secreted into tears (at protein level).

The protein resides in the secreted. In Mesocricetus auratus (Golden hamster), this protein is Female-specific lacrimal gland protein.